Consider the following 270-residue polypeptide: MPSSEASPAAGLSEDSTRHLPRILCLHGGGTNARIFKAQCRQLSAQLKRDFRFIYAEAPWISIAGPDVLAVYGQWGPFKRWLRWSPEQPDITTQETVKELDQCLARAVEADNACGTTGEVVAILGFSQGAKVAASVLYWQQRSGQSLGLRASNSGYRFGVLLAGSSPLVDLSTCEGDSNGLSENAWPGDDMIGPRALDCDTHKLIIPTLHVHGLQDRGLRLHRALMEDFCAPESTTLIEWDGVHRVPLNRAEVSRVAGQIRKLAGLTSNS.

Active-site charge relay system residues include Ser127, Asp216, and His244.

It belongs to the LovG family.

It participates in mycotoxin biosynthesis. Esterase; part of the gene cluster that mediates the biosynthesis of the selective antifungal agent ascochitine, an o-quinone methide that plays a possible protective role against other microbial competitors in nature and is considered to be important for pathogenicity of legume-associated Didymella species. The pathway probably begins with the synthesis of a keto-aldehyde intermediate by the ascochitine non-reducing polyketide synthase pksAC from successive condensations of 4 malonyl-CoA units, presumably with a simple acetyl-CoA starter unit. Release of the keto-aldehyde intermediate is consistent with the presence of the C-terminal reductive release domain. The HR-PKS (orf7) probably makes a diketide starter unit which is passed to the non-reducing polyketide synthase pksAC for further extension, producing ascochital and ascochitine. The aldehyde dehydrogenase (orf1), the 2-oxoglutarate-dependent dioxygenase (orf3) and the dehydrogenase (orf9) are probably involved in subsequent oxidations of methyl groups to the carboxylic acid of the heterocyclic ring. The ascochitine gene cluster also includes a gene encoding a short peptide with a cupin domain (orf2) that is often found in secondary metabolite gene clusters and which function has still to be determined. In Didymella fabae (Leaf and pod spot disease fungus), this protein is Esterase.